The primary structure comprises 180 residues: Large ribosomal subunit protein uL5 (180 aa).

The protein belongs to the universal ribosomal protein uL5 family. As to quaternary structure, part of the 50S ribosomal subunit; part of the 5S rRNA/L5/L18/L25 subcomplex. Contacts the 5S rRNA and the P site tRNA. Forms a bridge to the 30S subunit in the 70S ribosome.

Functionally, this is one of the proteins that bind and probably mediate the attachment of the 5S RNA into the large ribosomal subunit, where it forms part of the central protuberance. In the 70S ribosome it contacts protein S13 of the 30S subunit (bridge B1b), connecting the 2 subunits; this bridge is implicated in subunit movement. Contacts the P site tRNA; the 5S rRNA and some of its associated proteins might help stabilize positioning of ribosome-bound tRNAs. The sequence is that of Large ribosomal subunit protein uL5 from Streptococcus thermophilus (strain ATCC BAA-491 / LMD-9).